Reading from the N-terminus, the 102-residue chain is Large ribosomal subunit protein uL24 (102 aa).

This sequence belongs to the universal ribosomal protein uL24 family. Part of the 50S ribosomal subunit.

Functionally, one of two assembly initiator proteins, it binds directly to the 5'-end of the 23S rRNA, where it nucleates assembly of the 50S subunit. In terms of biological role, one of the proteins that surrounds the polypeptide exit tunnel on the outside of the subunit. This is Large ribosomal subunit protein uL24 from Rhizobium johnstonii (strain DSM 114642 / LMG 32736 / 3841) (Rhizobium leguminosarum bv. viciae).